A 354-amino-acid polypeptide reads, in one-letter code: MGCIMSQTDDAASRSKKIDRLLKEDQENANKTVKLLLLGAGESGKSTILKQMRIIHDVGYTKDERRVFRSVVFGNIILSLNAIIAAMEQLKIEYEKEEHRADARKVLAFGATGEEDEIPDELAALMKSVWSDEGIQKAVARSREYQLNDSAEYYLSQLDRICEADYIPTQDDVLRTRIKTTGIVETQFIFKDRLFVVFDVGGQRSERKKWIHCFEDVTALIFCVAMSEYDMVLMEDRKTNRMRESLKVFDSICNSKWFVETSIILFLNKKDLFEEKIKKSPLTYCFPEYTGHDNFDDGSAFIQKQFEIVNKRQGGQKEIYTQFTCATDTNNIRFVFDAVTDIVIRDNLRTCGLY.

Glycine 2 is lipidated: N-myristoyl glycine. A lipid anchor (S-palmitoyl cysteine) is attached at cysteine 3. The region spanning 31–354 (KTVKLLLLGA…RDNLRTCGLY (324 aa)) is the G-alpha domain. The tract at residues 34-47 (KLLLLGAGESGKST) is G1 motif. GTP contacts are provided by residues 39 to 46 (GAGESGKS), 174 to 180 (LRTRIKT), 199 to 203 (DVGGQ), 268 to 271 (NKKD), and alanine 326. Positions 46 and 180 each coordinate Mg(2+). Residues 172–180 (DVLRTRIKT) are G2 motif. The G3 motif stretch occupies residues 195–204 (FVVFDVGGQR). The segment at 264–271 (ILFLNKKD) is G4 motif. The interval 324–329 (TCATDT) is G5 motif.

Belongs to the G-alpha family. In terms of assembly, g proteins are composed of 3 units; alpha, beta and gamma. The alpha chain contains the guanine nucleotide binding site.

Its function is as follows. Guanine nucleotide-binding proteins (G proteins) are involved as modulators or transducers in various transmembrane signaling systems. In the 1-cell embryo, probably together with goa-1, controls nuclear rotation and spindle elongation during mitosis. During the first embryonic cell divisons, plays a role in gpr-1/2 cortical localization and in the proper orientation of EMS blastomere mitotic spindle. The polypeptide is Guanine nucleotide-binding protein alpha-16 subunit (gpa-16) (Caenorhabditis briggsae).